The following is a 68-amino-acid chain: MKAQLCILLIALVLFQTFSQSDAILSAIWSGIKSLFGRRGLNDLDDLDELFDGEISQADVDFLNELMR.

The first 23 residues, 1–23 (MKAQLCILLIALVLFQTFSQSDA), serve as a signal peptide directing secretion. Position 36 is a phenylalanine amide (Phe36). The propeptide occupies 38–68 (RRGLNDLDDLDELFDGEISQADVDFLNELMR).

Belongs to the non-disulfide-bridged peptide (NDBP) superfamily. Short antimicrobial peptide (group 4) family. Expressed by the venom gland.

Its subcellular location is the secreted. The protein resides in the target cell membrane. In terms of biological role, antimicrobial peptide. Inhibits the growth of Gram-positive and Gram-negative bacteria. Shows antifungal activity with MIC values ranging from 12.5 to 25 uM. Also shows an inhibitory activity on C.albicans biofilms at high concentrations. Shows low cytotoxic activity and has weak hemolytic activity. This is Amphipathic peptide OcyC1 from Opisthacanthus cayaporum (South American scorpion).